We begin with the raw amino-acid sequence, 182 residues long: MRVLGIDPGLRRTGFGVIDAEGMRLRYVASGTIVVPPALALPERLKVILDNLREVARETRPDVAALEIVFLNTNPASTLLLGQARGAALCALADSALDVHEYTALQIKKAVMGTGRAAKEQVQMMVQRLLSLDGTPAPDSADALACAICHAHVGPLHDKLDRLGTAAQLGSRPRLRNGRLVG.

Catalysis depends on residues aspartate 7, glutamate 67, and aspartate 139. Positions 7, 67, and 139 each coordinate Mg(2+).

It belongs to the RuvC family. In terms of assembly, homodimer which binds Holliday junction (HJ) DNA. The HJ becomes 2-fold symmetrical on binding to RuvC with unstacked arms; it has a different conformation from HJ DNA in complex with RuvA. In the full resolvosome a probable DNA-RuvA(4)-RuvB(12)-RuvC(2) complex forms which resolves the HJ. It depends on Mg(2+) as a cofactor.

The protein localises to the cytoplasm. It carries out the reaction Endonucleolytic cleavage at a junction such as a reciprocal single-stranded crossover between two homologous DNA duplexes (Holliday junction).. The RuvA-RuvB-RuvC complex processes Holliday junction (HJ) DNA during genetic recombination and DNA repair. Endonuclease that resolves HJ intermediates. Cleaves cruciform DNA by making single-stranded nicks across the HJ at symmetrical positions within the homologous arms, yielding a 5'-phosphate and a 3'-hydroxyl group; requires a central core of homology in the junction. The consensus cleavage sequence is 5'-(A/T)TT(C/G)-3'. Cleavage occurs on the 3'-side of the TT dinucleotide at the point of strand exchange. HJ branch migration catalyzed by RuvA-RuvB allows RuvC to scan DNA until it finds its consensus sequence, where it cleaves and resolves the cruciform DNA. The protein is Crossover junction endodeoxyribonuclease RuvC of Bordetella pertussis (strain Tohama I / ATCC BAA-589 / NCTC 13251).